The following is a 393-amino-acid chain: Phosphoenolpyruvate/phosphate translocator 3, chloroplastic (393 aa).

A chloroplast-targeting transit peptide spans 1–65 (MQRAAAASRA…LSGGRAVTAR (65 aa)). Transmembrane regions (helical) follow at residues 89-109 (LAETAQLGAMIVAWYLLNIYF), 124-144 (YTITAFQLAFGSFVIFLMWAL), 164-183 (AAGHMLGTVFTNMSLSKVAV), 195-217 (FFTVLLSAFFLGETPSLLVLGSL), 232-249 (LSFNWIGFWSAMASNLLY), 270-290 (INLFSILTILSFLLSLPLMLF), and 362-382 (TPISPVNALGTGVALGGVFLY). Residues 123–228 (PYTITAFQLA…PIVGGVALAS (106 aa)) form the EamA domain.

This sequence belongs to the TPT transporter family. PPT (TC 2.A.7.9) subfamily.

It localises to the plastid. The protein resides in the chloroplast membrane. In terms of biological role, phosphoenolpyruvate/phosphate translocator that transports phosphoenolpyruvate (PEP) and dihydroxyacetone phosphate. This is Phosphoenolpyruvate/phosphate translocator 3, chloroplastic (PPT3) from Oryza sativa subsp. japonica (Rice).